A 168-amino-acid chain; its full sequence is Acetone carboxylase gamma subunit (168 aa).

Heterohexamer of two alpha, two beta and two gamma subunits. It depends on Fe cation as a cofactor. Mg(2+) is required as a cofactor. The cofactor is Zn(2+).

The catalysed reaction is acetone + hydrogencarbonate + 2 ATP + 3 H2O = acetoacetate + 2 AMP + 4 phosphate + 4 H(+). Its function is as follows. Catalyzes the carboxylation of acetone to form acetoacetate. Has a reduced activity on butanone, and no activity on 2-pentatone, 3-pentatone, 2-hexanone, chloroacetone, pyruvate, phosphoenolpyruvate, acetaldehyde, propionaldehyde and propylene oxide. The protein is Acetone carboxylase gamma subunit of Xanthobacter autotrophicus (strain ATCC BAA-1158 / Py2).